The chain runs to 91 residues: Cell division protein FtsB (91 aa).

At 1–3 (MRW) the chain is on the cytoplasmic side. Residues 4–21 (PLIVLAVLVIVLQYPLWL) form a helical membrane-spanning segment. The Periplasmic segment spans residues 22 to 91 (GKGGWLRVWD…EIFVHTPRKP (70 aa)). Residues 28 to 74 (RVWDVDRQLQAQRETNQRLEQRNAGLEAEVRDLKSGNEAVEERARFE) adopt a coiled-coil conformation.

This sequence belongs to the FtsB family. As to quaternary structure, part of a complex composed of FtsB, FtsL and FtsQ.

It localises to the cell inner membrane. Functionally, essential cell division protein. May link together the upstream cell division proteins, which are predominantly cytoplasmic, with the downstream cell division proteins, which are predominantly periplasmic. The chain is Cell division protein FtsB from Aromatoleum aromaticum (strain DSM 19018 / LMG 30748 / EbN1) (Azoarcus sp. (strain EbN1)).